A 270-amino-acid polypeptide reads, in one-letter code: tRNA pseudouridine synthase A (270 aa).

Asp-60 serves as the catalytic Nucleophile. The segment at 107-111 is RNA binding; it reads FHARF. Residue Tyr-118 participates in substrate binding. Residues 168–172 are interaction with tRNA; the sequence is QCQSR.

It belongs to the tRNA pseudouridine synthase TruA family. As to quaternary structure, homodimer.

It carries out the reaction uridine(38/39/40) in tRNA = pseudouridine(38/39/40) in tRNA. Functionally, formation of pseudouridine at positions 38, 39 and 40 in the anticodon stem and loop of transfer RNAs. The polypeptide is tRNA pseudouridine synthase A (Escherichia coli O139:H28 (strain E24377A / ETEC)).